The sequence spans 282 residues: Protease HtpX homolog (282 aa).

Helical transmembrane passes span 6 to 26 and 28 to 48; these read TFIL…LIGG and QGVI…YFFS. Histidine 130 is a binding site for Zn(2+). Glutamate 131 is an active-site residue. Position 134 (histidine 134) interacts with Zn(2+). 2 consecutive transmembrane segments (helical) span residues 140–160 and 177–197; these read ILIG…ANFA and ILMI…QMAI. Glutamate 202 provides a ligand contact to Zn(2+).

It belongs to the peptidase M48B family. The cofactor is Zn(2+).

The protein resides in the cell inner membrane. This Campylobacter hominis (strain ATCC BAA-381 / DSM 21671 / CCUG 45161 / LMG 19568 / NCTC 13146 / CH001A) protein is Protease HtpX homolog.